Here is a 164-residue protein sequence, read N- to C-terminus: HTH-type transcriptional regulator IscR (164 aa).

One can recognise an HTH rrf2-type domain in the interval 2-131; the sequence is RLTSKGRYAV…NNITLDELVN (130 aa). The segment at residues 28 to 51 is a DNA-binding region (H-T-H motif); the sequence is LADISERQGISLSYLEQLFSRLRK. 3 residues coordinate [2Fe-2S] cluster: C92, C98, and C104.

[2Fe-2S] cluster is required as a cofactor.

Regulates the transcription of several operons and genes involved in the biogenesis of Fe-S clusters and Fe-S-containing proteins. The sequence is that of HTH-type transcriptional regulator IscR from Pectobacterium carotovorum subsp. carotovorum (strain PC1).